The following is a 179-amino-acid chain: Large ribosomal subunit protein uL5 (179 aa).

It belongs to the universal ribosomal protein uL5 family. Part of the 50S ribosomal subunit; part of the 5S rRNA/L5/L18/L25 subcomplex. Contacts the 5S rRNA and the P site tRNA. Forms a bridge to the 30S subunit in the 70S ribosome.

Its function is as follows. This is one of the proteins that bind and probably mediate the attachment of the 5S RNA into the large ribosomal subunit, where it forms part of the central protuberance. In the 70S ribosome it contacts protein S13 of the 30S subunit (bridge B1b), connecting the 2 subunits; this bridge is implicated in subunit movement. Contacts the P site tRNA; the 5S rRNA and some of its associated proteins might help stabilize positioning of ribosome-bound tRNAs. The polypeptide is Large ribosomal subunit protein uL5 (Neisseria gonorrhoeae (strain ATCC 700825 / FA 1090)).